Here is a 360-residue protein sequence, read N- to C-terminus: Peptide chain release factor 1 (360 aa).

Gln235 is modified (N5-methylglutamine). Residues Lys285 to Pro313 form a disordered region.

Belongs to the prokaryotic/mitochondrial release factor family. In terms of processing, methylated by PrmC. Methylation increases the termination efficiency of RF1.

It localises to the cytoplasm. Functionally, peptide chain release factor 1 directs the termination of translation in response to the peptide chain termination codons UAG and UAA. The polypeptide is Peptide chain release factor 1 (Klebsiella pneumoniae (strain 342)).